We begin with the raw amino-acid sequence, 426 residues long: Putative phosphate permease TC_0064 (426 aa).

Transmembrane regions (helical) follow at residues 1-21, 37-57, 83-103, 104-124, 140-160, 183-203, 207-227, 260-280, 309-329, 365-385, and 399-419; these read MWWL…NIGA, LTLR…AVVL, VFGM…ASFF, GWPV…GIIL, VSWL…FSFI, AIII…ARVV, VAFR…IWGV, LVVE…MSFA, VLFI…ATWG, FGFP…VGLA, and IVLS…MFFL.

The protein belongs to the inorganic phosphate transporter (PiT) (TC 2.A.20) family.

The protein resides in the cell membrane. Its function is as follows. Potential transporter for phosphate. The polypeptide is Putative phosphate permease TC_0064 (Chlamydia muridarum (strain MoPn / Nigg)).